A 242-amino-acid chain; its full sequence is Synaptonemal complex central element protein 1-like (242 aa).

Positions 1–24 are disordered; sequence MAGKLKPLNVEAPEATEEAEGQAK. A coiled-coil region spans residues 44–181; that stretch reads LEPQIEDLIS…LREVERRLHS (138 aa). The tract at residues 206 to 242 is disordered; sequence VRSAPEVGAGEGEAGPELPRARDEEDPEPPVAAPDAL.

This sequence belongs to the SYCE family.

In terms of biological role, may be involved in meiosis. This chain is Synaptonemal complex central element protein 1-like (SYCE1L), found in Homo sapiens (Human).